The sequence spans 520 residues: Glutamate--cysteine ligase (520 aa).

This sequence belongs to the glutamate--cysteine ligase type 1 family. Type 1 subfamily.

The enzyme catalyses L-cysteine + L-glutamate + ATP = gamma-L-glutamyl-L-cysteine + ADP + phosphate + H(+). It functions in the pathway sulfur metabolism; glutathione biosynthesis; glutathione from L-cysteine and L-glutamate: step 1/2. This chain is Glutamate--cysteine ligase, found in Sodalis glossinidius (strain morsitans).